Consider the following 237-residue polypeptide: Ras-related protein Rab-33A (237 aa).

8 residues coordinate GTP: asparagine 46, valine 47, glycine 48, lysine 49, threonine 50, cysteine 51, threonine 65, and threonine 68. Threonine 50 contacts Mg(2+). Positions 59 to 71 (GTFPDKTEATIGV) match the Switch 1 motif. 2 residues coordinate Mg(2+): threonine 68 and aspartate 91. The Switch 2 signature appears at 92–111 (TAGQERFRKSMVEHYYRNVH). GTP contacts are provided by glycine 94, asparagine 151, lysine 152, aspartate 154, alanine 182, and lysine 183. Residues cysteine 235 and cysteine 237 are each lipidated (S-geranylgeranyl cysteine). Residue cysteine 237 is modified to Cysteine methyl ester.

Belongs to the small GTPase superfamily. Rab family. As to quaternary structure, interacts with ATG16L1; the interaction is important for autophagosome formation. Mg(2+) serves as cofactor. Expressed predominantly in brain. Weak expression in ovary.

It is found in the cell membrane. It carries out the reaction GTP + H2O = GDP + phosphate + H(+). Regulated by guanine nucleotide exchange factors (GEFs) which promote the exchange of bound GDP for free GTP. Regulated by GTPase activating proteins (GAPs) which increase the GTP hydrolysis activity. Inhibited by GDP dissociation inhibitors (GDIs). The small GTPases Rab are key regulators of intracellular membrane trafficking, from the formation of transport vesicles to their fusion with membranes. Rabs cycle between an inactive GDP-bound form and an active GTP-bound form that is able to recruit to membranes different sets of downstream effectors directly responsible for vesicle formation, movement, tethering and fusion. Modulates autophagosome formation through interaction with ATG16L1. In Mus musculus (Mouse), this protein is Ras-related protein Rab-33A.